A 372-amino-acid chain; its full sequence is Glutamate 5-kinase (372 aa).

Lys-14 lines the ATP pocket. Residues Ser-54, Asp-141, and Asn-153 each contribute to the substrate site. Position 173 to 174 (173 to 174 (TD)) interacts with ATP. In terms of domain architecture, PUA spans 280-358 (RGHVVIDDGA…GEIESVLGYM (79 aa)).

Belongs to the glutamate 5-kinase family.

It is found in the cytoplasm. It carries out the reaction L-glutamate + ATP = L-glutamyl 5-phosphate + ADP. Its pathway is amino-acid biosynthesis; L-proline biosynthesis; L-glutamate 5-semialdehyde from L-glutamate: step 1/2. Functionally, catalyzes the transfer of a phosphate group to glutamate to form L-glutamate 5-phosphate. The protein is Glutamate 5-kinase of Paraburkholderia xenovorans (strain LB400).